A 353-amino-acid polypeptide reads, in one-letter code: Photosystem II protein D1 (353 aa).

Residue T2 is modified to N-acetylthreonine. The residue at position 2 (T2) is a Phosphothreonine. 3 consecutive transmembrane segments (helical) span residues 29-46, 118-133, and 142-156; these read YIGWFGVLMIPTLLTATS, HFLLGVACYMGREWEL, and WIAVAYSAPVAAATA. H118 contacts chlorophyll a. Position 126 (Y126) interacts with pheophytin a. [CaMn4O5] cluster is bound by residues D170 and E189. A helical transmembrane segment spans residues 197–218; sequence FHMLGVAGVFGGSLFSAMHGSL. H198 serves as a coordination point for chlorophyll a. Residues H215 and 264–265 each bind a quinone; that span reads SF. H215 lines the Fe cation pocket. H272 contributes to the Fe cation binding site. Residues 274-288 form a helical membrane-spanning segment; that stretch reads FLAAWPVVGIWFTAL. [CaMn4O5] cluster is bound by residues H332, E333, D342, and A344. The propeptide occupies 345–353; it reads AVEAPSTNG.

Belongs to the reaction center PufL/M/PsbA/D family. As to quaternary structure, PSII is composed of 1 copy each of membrane proteins PsbA, PsbB, PsbC, PsbD, PsbE, PsbF, PsbH, PsbI, PsbJ, PsbK, PsbL, PsbM, PsbT, PsbX, PsbY, PsbZ, Psb30/Ycf12, at least 3 peripheral proteins of the oxygen-evolving complex and a large number of cofactors. It forms dimeric complexes. Requires The D1/D2 heterodimer binds P680, chlorophylls that are the primary electron donor of PSII, and subsequent electron acceptors. It shares a non-heme iron and each subunit binds pheophytin, quinone, additional chlorophylls, carotenoids and lipids. D1 provides most of the ligands for the Mn4-Ca-O5 cluster of the oxygen-evolving complex (OEC). There is also a Cl(-1) ion associated with D1 and D2, which is required for oxygen evolution. The PSII complex binds additional chlorophylls, carotenoids and specific lipids. as cofactor. Tyr-161 forms a radical intermediate that is referred to as redox-active TyrZ, YZ or Y-Z. In terms of processing, C-terminally processed by CTPA; processing is essential to allow assembly of the oxygen-evolving complex and thus photosynthetic growth.

Its subcellular location is the plastid. It is found in the chloroplast thylakoid membrane. The enzyme catalyses 2 a plastoquinone + 4 hnu + 2 H2O = 2 a plastoquinol + O2. Functionally, photosystem II (PSII) is a light-driven water:plastoquinone oxidoreductase that uses light energy to abstract electrons from H(2)O, generating O(2) and a proton gradient subsequently used for ATP formation. It consists of a core antenna complex that captures photons, and an electron transfer chain that converts photonic excitation into a charge separation. The D1/D2 (PsbA/PsbD) reaction center heterodimer binds P680, the primary electron donor of PSII as well as several subsequent electron acceptors. In Nymphaea alba (White water-lily), this protein is Photosystem II protein D1.